The primary structure comprises 665 residues: Protein-arginine deiminase type-2 (665 aa).

17 residues coordinate Ca(2+): aspartate 123, aspartate 125, aspartate 127, glutamate 131, asparagine 154, aspartate 156, aspartate 158, aspartate 166, aspartate 169, lysine 171, aspartate 177, aspartate 180, glutamate 354, aspartate 389, phenylalanine 408, leucine 411, and glutamate 412. Catalysis depends on cysteine 647, which acts as the Nucleophile.

Belongs to the protein arginine deiminase family. As to quaternary structure, homodimer. Requires Ca(2+) as cofactor. In terms of tissue distribution, spinal cord, submaxillary gland, cerebrum, cerebellum, and skeletal muscle.

Its subcellular location is the cytoplasm. It catalyses the reaction L-arginyl-[protein] + H2O = L-citrullyl-[protein] + NH4(+). Its function is as follows. Catalyzes the deimination of arginine residues of proteins. This is Protein-arginine deiminase type-2 (Padi2) from Rattus norvegicus (Rat).